A 908-amino-acid polypeptide reads, in one-letter code: Serine/threonine-protein kinase WARTS homolog (908 aa).

Residues 42–70 (EIRVGRHRAKLDEIRESLKAYEHEAGLLS) are a coiled coil. Low complexity-rich tracts occupy residues 115–125 (VSSAAVSNSNS) and 168–181 (PSTTISSTPSTTTE). Disordered stretches follow at residues 115–134 (VSSAAVSNSNSFRTEGGGHK), 162–183 (MIRNGNPSTTISSTPSTTTEES), 203–225 (NNNAPQYSPGYSRPPPPAYDSSP), and 388–412 (KSRAQPPPPQYNQPSEPPPKRVSSP). A compositionally biased stretch (pro residues) spans 392–404 (QPPPPQYNQPSEP). Residues 439 to 470 (YMEQHVERLLQQYKEREKRMKQLEKEMVSAQL) are a coiled coil. Residues 502 to 807 (FTVISHIGVG…TAQVKNHPWF (306 aa)) form the Protein kinase domain. ATP contacts are provided by residues 508-516 (IGVGAFGKV) and Lys531. The active-site Proton acceptor is the Asp625. The region spanning 808 to 874 (RGIDWVNLRK…RHFFDTDSVG (67 aa)) is the AGC-kinase C-terminal domain.

Belongs to the protein kinase superfamily. AGC Ser/Thr protein kinase family. In terms of assembly, interacts (via N-terminus) with yap-1 (via WW domain). The cofactor is Mg(2+). Expressed in muscles and epithelial tissues including pharynx, intestine and hypodermis. Expressed in vulval and spermathecal seam cells.

It localises to the cytoplasm. The protein resides in the apical cell membrane. The enzyme catalyses L-seryl-[protein] + ATP = O-phospho-L-seryl-[protein] + ADP + H(+). The catalysed reaction is L-threonyl-[protein] + ATP = O-phospho-L-threonyl-[protein] + ADP + H(+). Functionally, phosphorylates yap-1 which may negatively regulate yap-1 nuclear localization. Plays an essential role in larval development. Regulates growth, the formation of gut granules, lifespan and cell and body sizes probably in synergy with the TGF-beta sma/mab pathway. Does not appear to regulate apoptosis and proliferation. In addition, may synergize with the TGF-beta daf-7 dauer pathway to regulate entry into the dauer stage. Maintains the cellular integrity of intestinal cells by regulating the localization of apical actin and junctional proteins. This is Serine/threonine-protein kinase WARTS homolog from Caenorhabditis elegans.